Here is a 199-residue protein sequence, read N- to C-terminus: Peroxynitrite isomerase (199 aa).

The short motif at 20–26 (GVWEGSG) is the GXWXGXG element. Residues K158 and H190 each coordinate heme b.

This sequence belongs to the nitrobindin family. Homodimer. Heme b is required as a cofactor.

The catalysed reaction is peroxynitrite = nitrate. It participates in nitrogen metabolism. Its function is as follows. Heme-binding protein able to scavenge peroxynitrite and to protect free L-tyrosine against peroxynitrite-mediated nitration, by acting as a peroxynitrite isomerase that converts peroxynitrite to nitrate. Therefore, this protein likely plays a role in peroxynitrite sensing and in the detoxification of reactive nitrogen and oxygen species (RNS and ROS, respectively). Is able to bind nitric oxide (NO) in vitro, but may act as a sensor of peroxynitrite levels in vivo. The protein is Peroxynitrite isomerase of Clavibacter sepedonicus (Clavibacter michiganensis subsp. sepedonicus).